The following is a 416-amino-acid chain: Gamma-glutamyl phosphate reductase (416 aa).

Belongs to the gamma-glutamyl phosphate reductase family.

The protein localises to the cytoplasm. It carries out the reaction L-glutamate 5-semialdehyde + phosphate + NADP(+) = L-glutamyl 5-phosphate + NADPH + H(+). Its pathway is amino-acid biosynthesis; L-proline biosynthesis; L-glutamate 5-semialdehyde from L-glutamate: step 2/2. Catalyzes the NADPH-dependent reduction of L-glutamate 5-phosphate into L-glutamate 5-semialdehyde and phosphate. The product spontaneously undergoes cyclization to form 1-pyrroline-5-carboxylate. The sequence is that of Gamma-glutamyl phosphate reductase from Vibrio parahaemolyticus serotype O3:K6 (strain RIMD 2210633).